The following is a 394-amino-acid chain: MSDGFGRPPPPAPAGHPTGAAGGDPVRVMVVDDSAVIRGLLTRALEGDTEIRVVASVGDGQMAVNALQRNSLDVIVLDIEMPVMDGLTAIPKLLAVAPQVKIIMASTLTLRGADISMRCLSAGAADYIPKPTSTREIGGADAFKRELVSKVKALGAAARRAGSRTRGELRPLNPVPAAFLKREPPPVTLRPAPAVGSVGQVKPDVIAIGSSTGGPQALFEVLAHLKTGVTQPILITQHMPATFTTILAEHITRQCGMNAQEAKDGEPVVPGRCYIAPGDFHMLVTQRAGANVISLTKDPPENFCRPAVDPMMRSILRAFGGRKVLACILTGMGQDGLKGCTEVVNAGGTLIAQDEASSVVWGMPGAVAQAGICSAVLPLKEIGPYIRKFASRAA.

The interval 1–24 (MSDGFGRPPPPAPAGHPTGAAGGD) is disordered. The segment covering 15-24 (GHPTGAAGGD) has biased composition (low complexity). Residues 27–145 (RVMVVDDSAV…EIGGADAFKR (119 aa)) enclose the Response regulatory domain. The residue at position 78 (aspartate 78) is a 4-aspartylphosphate. A CheB-type methylesterase domain is found at 191 to 393 (PAPAVGSVGQ…PYIRKFASRA (203 aa)). Residues serine 211, histidine 238, and aspartate 335 contribute to the active site.

The protein belongs to the CheB family. Phosphorylated by CheA. Phosphorylation of the N-terminal regulatory domain activates the methylesterase activity.

The protein resides in the cytoplasm. It carries out the reaction [protein]-L-glutamate 5-O-methyl ester + H2O = L-glutamyl-[protein] + methanol + H(+). It catalyses the reaction L-glutaminyl-[protein] + H2O = L-glutamyl-[protein] + NH4(+). Involved in chemotaxis. Part of a chemotaxis signal transduction system that modulates chemotaxis in response to various stimuli. Catalyzes the demethylation of specific methylglutamate residues introduced into the chemoreceptors (methyl-accepting chemotaxis proteins or MCP) by CheR. Also mediates the irreversible deamidation of specific glutamine residues to glutamic acid. The chain is Protein-glutamate methylesterase/protein-glutamine glutaminase from Azospirillum brasilense.